The sequence spans 386 residues: uncharacterized protein (386 aa).

The next 2 membrane-spanning stretches (helical) occupy residues 54–74 (AVLQ…AIVA) and 347–367 (LLGG…PIAG).

To M.tuberculosis Rv0628c.

It localises to the cell membrane. This is an uncharacterized protein from Mycobacterium tuberculosis (strain CDC 1551 / Oshkosh).